Here is a 517-residue protein sequence, read N- to C-terminus: Glycosyltransferase family 92 protein F55C10.4 (517 aa).

Residues 9 to 31 (FLKYFIIFTFFCVTFCFLKLCLG) form a helical membrane-spanning segment. The 299-residue stretch at 156–454 (KPVIFCVSPQ…FKCYNESFYH (299 aa)) folds into the GT92 domain.

This sequence belongs to the glycosyltransferase 92 family.

The protein localises to the membrane. This chain is Glycosyltransferase family 92 protein F55C10.4, found in Caenorhabditis elegans.